Here is a 225-residue protein sequence, read N- to C-terminus: ATP-dependent dethiobiotin synthetase BioD (225 aa).

Residue 12-17 participates in ATP binding; that stretch reads GVGKTV. Residue Thr16 coordinates Mg(2+). Lys37 is a catalytic residue. Thr41 serves as a coordination point for substrate. ATP is bound by residues Asp49, 108-111, and 197-199; these read EGAG and PAG. Mg(2+) contacts are provided by Asp49 and Glu108.

Belongs to the dethiobiotin synthetase family. As to quaternary structure, homodimer. Requires Mg(2+) as cofactor.

The protein localises to the cytoplasm. The catalysed reaction is (7R,8S)-7,8-diammoniononanoate + CO2 + ATP = (4R,5S)-dethiobiotin + ADP + phosphate + 3 H(+). It functions in the pathway cofactor biosynthesis; biotin biosynthesis; biotin from 7,8-diaminononanoate: step 1/2. Its function is as follows. Catalyzes a mechanistically unusual reaction, the ATP-dependent insertion of CO2 between the N7 and N8 nitrogen atoms of 7,8-diaminopelargonic acid (DAPA, also called 7,8-diammoniononanoate) to form a ureido ring. The protein is ATP-dependent dethiobiotin synthetase BioD of Mycolicibacterium smegmatis (strain ATCC 700084 / mc(2)155) (Mycobacterium smegmatis).